Here is a 549-residue protein sequence, read N- to C-terminus: Glucose-6-phosphate isomerase (549 aa).

N6-acetyllysine occurs at positions 80, 228, and 234. Residue Glu-355 is the Proton donor of the active site. Residues His-386 and Lys-514 contribute to the active site.

It belongs to the GPI family.

It localises to the cytoplasm. It catalyses the reaction alpha-D-glucose 6-phosphate = beta-D-fructose 6-phosphate. The protein operates within carbohydrate biosynthesis; gluconeogenesis. It participates in carbohydrate degradation; glycolysis; D-glyceraldehyde 3-phosphate and glycerone phosphate from D-glucose: step 2/4. Catalyzes the reversible isomerization of glucose-6-phosphate to fructose-6-phosphate. The polypeptide is Glucose-6-phosphate isomerase (Escherichia coli O139:H28 (strain E24377A / ETEC)).